A 152-amino-acid polypeptide reads, in one-letter code: Mitochondrial fission 1 protein (152 aa).

The residue at position 1 (Met-1) is an N-acetylmethionine. Topologically, residues 1–122 are cytoplasmic; it reads MEAVLNELVS…LIDKAMKKDG (122 aa). Ser-10 is subject to Phosphoserine. A TPR repeat occupies 71–104; it reads RDYVFYLAVGNYRLKEYEKALKYVRGLLQTEPQN. Residues 123–143 form a helical membrane-spanning segment; the sequence is LVGMAIVGGMALGVAGLAGLI. Residues 144 to 152 are Mitochondrial intermembrane-facing; the sequence is GLAVSKSKS.

Belongs to the FIS1 family. Interacts with DNM1L/DLP1 through the TPR region; may form part of a larger protein complex at the endoplasmic reticulum-mitochondrial interface during mitochondrial fission. Interacts with MARCHF5. Interacts with MIEF1. Interacts with PEX11A, PEX11B and PEX11G. Post-translationally, ubiquitinated by MARCHF5.

The protein localises to the mitochondrion outer membrane. It is found in the peroxisome membrane. In terms of biological role, involved in the fragmentation of the mitochondrial network and its perinuclear clustering. Plays a minor role in the recruitment and association of the fission mediator dynamin-related protein 1 (DNM1L) to the mitochondrial surface and mitochondrial fission. May not be essential for the assembly of functional fission complexes and the subsequent membrane scission event. Also mediates peroxisomal fission. May act when the products of fission are directed toward mitochondrial homeostasis, mitophagy, or apoptosis. Can induce cytochrome c release from the mitochondrion to the cytosol, ultimately leading to apoptosis. The protein is Mitochondrial fission 1 protein of Rattus norvegicus (Rat).